The chain runs to 482 residues: Hydroxymethylglutaryl-CoA synthase A (482 aa).

The active-site Proton donor/acceptor is Glu-85. The Acyl-thioester intermediate role is filled by Cys-119. Residues Cys-119, Thr-161, Ser-211, His-249, Lys-258, Asn-325, and Ser-358 each contribute to the (3S)-3-hydroxy-3-methylglutaryl-CoA site. His-249 acts as the Proton donor/acceptor in catalysis.

It belongs to the thiolase-like superfamily. HMG-CoA synthase family.

It carries out the reaction acetoacetyl-CoA + acetyl-CoA + H2O = (3S)-3-hydroxy-3-methylglutaryl-CoA + CoA + H(+). It participates in metabolic intermediate biosynthesis; (R)-mevalonate biosynthesis; (R)-mevalonate from acetyl-CoA: step 2/3. Functionally, condenses acetyl-CoA with acetoacetyl-CoA to form HMG-CoA, which is the substrate for HMG-CoA reductase. This is Hydroxymethylglutaryl-CoA synthase A (hgsA) from Dictyostelium discoideum (Social amoeba).